Here is a 383-residue protein sequence, read N- to C-terminus: RNA-binding motif, single-stranded-interacting protein 2 (383 aa).

Met-1 carries the N-acetylmethionine modification. Residues 28–56 (QMAPPSPRNSTPNSSGGGGGGSGGNDQLS) are disordered. Gly residues predominate over residues 42 to 51 (SGGGGGGSGG). 2 RRM domains span residues 58–131 (TNLY…MAKQ) and 137–222 (TNLY…FADG). Ser-108 is modified (phosphoserine). Phosphoserine is present on Ser-287. A disordered region spans residues 352–383 (SSVSAEESNGQQNQLAVEPPSDHGVYPFQFSK).

It is found in the nucleus. The sequence is that of RNA-binding motif, single-stranded-interacting protein 2 (Rbms2) from Mus musculus (Mouse).